The sequence spans 1050 residues: DNA polymerase I A, chloroplastic/mitochondrial (1050 aa).

A chloroplast and mitochondrion-targeting transit peptide spans 1-91 (MAMGVSLTSH…VVFNGEWELR (91 aa)). The tract at residues 202–240 (PRKGLDVGDNMDVNPKGEGIQRPLISDKSSGTANGNKNT) is disordered. Positions 228 to 240 (DKSSGTANGNKNT) are enriched in polar residues. The region spanning 312–490 (ELICFSIYCG…LYESMTKKLQ (179 aa)) is the 3'-5' exonuclease domain. Residues 673 to 694 (VVEDDDVETSETQKSKTDDETD) are disordered. The segment at 717–1048 (AIASLCEVCS…DAKCAQNWYA (332 aa)) is polymerase.

Belongs to the DNA polymerase type-A family. Expressed in shoot apical meristem.

It localises to the plastid. Its subcellular location is the chloroplast. The protein localises to the mitochondrion. The catalysed reaction is DNA(n) + a 2'-deoxyribonucleoside 5'-triphosphate = DNA(n+1) + diphosphate. With respect to regulation, not inhibited by aphidicolin. Functionally, in addition to polymerase activity, this DNA polymerase exhibits 5'-3' exonuclease activity. Required for DNA replication and accumulation in plastids and mitochondria. May be required for DNA repair in both organelles. In Arabidopsis thaliana (Mouse-ear cress), this protein is DNA polymerase I A, chloroplastic/mitochondrial (POLIA).